Consider the following 62-residue polypeptide: Large ribosomal subunit protein eL37 (62 aa).

Residues Cys-20, Cys-23, Cys-35, and Cys-38 each coordinate Zn(2+). Residues 20–38 form a C4-type zinc finger; sequence CRRCGRRSYHVRKKACSAC.

It belongs to the eukaryotic ribosomal protein eL37 family. The cofactor is Zn(2+).

In terms of biological role, binds to the 23S rRNA. The polypeptide is Large ribosomal subunit protein eL37 (Methanococcus aeolicus (strain ATCC BAA-1280 / DSM 17508 / OCM 812 / Nankai-3)).